A 347-amino-acid polypeptide reads, in one-letter code: Suppressor of RNA-mediated gene silencing (347 aa).

Belongs to the phytoreovirus non-structural protein 10 family.

In terms of biological role, suppressor of RNA-mediated gene silencing, also known as post-transcriptional gene silencing (PTGS), a mechanism of plant viral defense that limits the accumulation of viral RNAs. This is Suppressor of RNA-mediated gene silencing from Catharanthus roseus (Madagascar periwinkle).